The primary structure comprises 129 residues: Phosphoribosyl-AMP cyclohydrolase (129 aa).

D85 lines the Mg(2+) pocket. A Zn(2+)-binding site is contributed by C86. D87 and D89 together coordinate Mg(2+). Positions 102 and 109 each coordinate Zn(2+).

Belongs to the PRA-CH family. As to quaternary structure, homodimer. Mg(2+) is required as a cofactor. Zn(2+) serves as cofactor.

The protein localises to the cytoplasm. The catalysed reaction is 1-(5-phospho-beta-D-ribosyl)-5'-AMP + H2O = 1-(5-phospho-beta-D-ribosyl)-5-[(5-phospho-beta-D-ribosylamino)methylideneamino]imidazole-4-carboxamide. It participates in amino-acid biosynthesis; L-histidine biosynthesis; L-histidine from 5-phospho-alpha-D-ribose 1-diphosphate: step 3/9. Catalyzes the hydrolysis of the adenine ring of phosphoribosyl-AMP. This is Phosphoribosyl-AMP cyclohydrolase from Methanococcus maripaludis (strain C5 / ATCC BAA-1333).